The sequence spans 195 residues: MKVTKSEIVISAVKPEQYPEGGLPEIALAGRSNVGKSSFINSLINRKNLARTSSKPGKTQTLNFYIINDELHFVDVPGYGFAKVSKSEREAWGRMIETYITTREELKAVVQIVDLRHAPSNDDVQMYEFLKYYGIPVIVIATKADKIPKGKWDKHAKVVRQTLNIDPEDELILFSSETKKGKDEAWGAIKKMINR.

In terms of domain architecture, EngB-type G spans 22–195; that stretch reads GLPEIALAGR…WGAIKKMINR (174 aa). GTP-binding positions include 30-37, 57-61, 75-78, 142-145, and 174-176; these read GRSNVGKS, GKTQT, DVPG, TKAD, and FSS. The Mg(2+) site is built by Ser37 and Thr59.

Belongs to the TRAFAC class TrmE-Era-EngA-EngB-Septin-like GTPase superfamily. EngB GTPase family. Mg(2+) serves as cofactor.

Its function is as follows. Necessary for normal cell division and for the maintenance of normal septation. Functionally, binds GTP and GDP. This chain is Probable GTP-binding protein EngB, found in Bacillus subtilis (strain 168).